The chain runs to 503 residues: Maturase K (503 aa).

It belongs to the intron maturase 2 family. MatK subfamily.

Its subcellular location is the plastid. The protein resides in the chloroplast. Its function is as follows. Usually encoded in the trnK tRNA gene intron. Probably assists in splicing its own and other chloroplast group II introns. This chain is Maturase K, found in Vicia faba (Broad bean).